We begin with the raw amino-acid sequence, 331 residues long: GTP 3',8-cyclase (331 aa).

The 231-residue stretch at 1-231 folds into the Radical SAM core domain; that stretch reads MNAVDYLRIS…DGQVQGNGPA (231 aa). Arg-8 contacts GTP. [4Fe-4S] cluster-binding residues include Cys-15 and Cys-19. Tyr-21 is an S-adenosyl-L-methionine binding site. Cys-22 is a binding site for [4Fe-4S] cluster. A GTP-binding site is contributed by Arg-60. Gly-64 contributes to the S-adenosyl-L-methionine binding site. Residue Thr-91 coordinates GTP. An S-adenosyl-L-methionine-binding site is contributed by Ser-115. Lys-157 lines the GTP pocket. Met-191 contributes to the S-adenosyl-L-methionine binding site. Positions 254 and 257 each coordinate [4Fe-4S] cluster. Residue 259–261 coordinates GTP; the sequence is RMR. Cys-271 contributes to the [4Fe-4S] cluster binding site.

It belongs to the radical SAM superfamily. MoaA family. Monomer and homodimer. [4Fe-4S] cluster is required as a cofactor.

The catalysed reaction is GTP + AH2 + S-adenosyl-L-methionine = (8S)-3',8-cyclo-7,8-dihydroguanosine 5'-triphosphate + 5'-deoxyadenosine + L-methionine + A + H(+). It functions in the pathway cofactor biosynthesis; molybdopterin biosynthesis. Its function is as follows. Catalyzes the cyclization of GTP to (8S)-3',8-cyclo-7,8-dihydroguanosine 5'-triphosphate. The protein is GTP 3',8-cyclase of Acaryochloris marina (strain MBIC 11017).